The chain runs to 577 residues: Serine/threonine-protein kinase AGC1-5 (577 aa).

Residues Met-1 to Val-12 show a composition bias toward polar residues. Positions Met-1 to Gly-151 are disordered. The segment covering Pro-44 to Val-55 has biased composition (basic and acidic residues). Composition is skewed to polar residues over residues Thr-69 to Gly-87 and Leu-110 to Ala-120. The Protein kinase domain occupies Phe-185–Phe-509. Residues Leu-191–Val-199 and Lys-214 each bind ATP. Residue Asp-310 is the Proton acceptor of the active site. The AGC-kinase C-terminal domain occupies Glu-510–Phe-577.

It belongs to the protein kinase superfamily. AGC Ser/Thr protein kinase family. As to quaternary structure, interacts with PDPK1/PDK1. Post-translationally, autophosphorylated and phosphorylated by PDPK1/PDK1. Specifically expressed in pollen grains.

The catalysed reaction is L-seryl-[protein] + ATP = O-phospho-L-seryl-[protein] + ADP + H(+). It carries out the reaction L-threonyl-[protein] + ATP = O-phospho-L-threonyl-[protein] + ADP + H(+). Its activity is regulated as follows. Activated by PDPK1/PDK1. In terms of biological role, functions redudantly with AGC1-7 as signaling component in the pollen tube. Required for polarized growth of pollen tubes. The polypeptide is Serine/threonine-protein kinase AGC1-5 (Arabidopsis thaliana (Mouse-ear cress)).